Consider the following 84-residue polypeptide: Transcription elongation factor 1 homolog (84 aa).

C26, C29, C50, and C53 together coordinate Zn(2+).

Belongs to the ELOF1 family.

The protein localises to the nucleus. Functionally, transcription elongation factor implicated in the maintenance of proper chromatin structure in actively transcribed regions. This chain is Transcription elongation factor 1 homolog, found in Caenorhabditis elegans.